A 771-amino-acid chain; its full sequence is Kinase suppressor of Ras A (771 aa).

Positions 152-169 are enriched in polar residues; sequence SRTSSGSTDEPSGQSTPA. Residues 152-172 are disordered; sequence SRTSSGSTDEPSGQSTPAIVT. The Phorbol-ester/DAG-type zinc finger occupies 215–269; sequence PHKWHRSTKFRFSGDAVCHFCQRPLGFGFLNAWEKCRSCKWKVHTQCKGRVGDSC. 2 disordered regions span residues 290–339 and 414–433; these read GMWK…ISGN and DSTGSQEVDSEAAPSQEAVD. Positions 318-331 are enriched in low complexity; it reads SSSSTNSSAPSTPA. Residues 477–748 form the Protein kinase domain; sequence DKQAPIIGRG…TDINLKLTAL (272 aa). ATP contacts are provided by residues 483 to 491 and lysine 503; that span reads IGRGRFGKV. The Proton acceptor role is filled by aspartate 600.

The protein belongs to the protein kinase superfamily. TKL Ser/Thr protein kinase family. In terms of assembly, interacts with mek-2. The cofactor is Mg(2+).

The catalysed reaction is L-seryl-[protein] + ATP = O-phospho-L-seryl-[protein] + ADP + H(+). It catalyses the reaction L-threonyl-[protein] + ATP = O-phospho-L-threonyl-[protein] + ADP + H(+). Functionally, serine/threonine-protein kinase which positively regulates Ras-mediated signaling probably acting at the level of let-60/ras or/and lin-45/raf. Involved in sex myoblast migration. Plays a role in responses to M.nematophilum-mediated bacterial infection by promoting tail swelling and preventing constipation. Functions redundantly with ksr-2 in the Ras-mediated regulation of larval survival, the development of excretory canal and in mpk-1 phosphorylation in somatic cells. In addition, involved in determining vulval precursor cell fate during vulval induction independently of its kinase activity. Plays a role in egg-laying. The protein is Kinase suppressor of Ras A of Caenorhabditis elegans.